Here is a 381-residue protein sequence, read N- to C-terminus: Terpene cyclase ATR13 (381 aa).

The protein belongs to the terpene synthase family.

Its pathway is mycotoxin biosynthesis. Terpene cyclase; part of the core atranone cluster (CAC) which products are predicted to catalyze most or all steps of mycotoxin atranone synthesis, starting from geranylgeranyl pyrophosphate (GGPP). The initial cyclization of GGPP to dolabellane is probably performed by the terpene cyclase ATR13. The Baeyer-Villiger oxidation near the end of the atranone synthesis, which converts atranones D and E to atranones F and G is predicted to be catalyzed by the monooxygenase ATR8. Of the CAC's other predicted gene products, the reducing PKS ATR6 might synthesize a polyketide chain. This polyketide is probably transferred onto the atranone backbone by the polyketide transferase ATR5. Other predicted CAC products include 4 oxygenases (ATR2, ATR3, ATR4, and ATR14), 3 short-chain reductases (ATR7, ATR9, and ATR10), and a methyltransferase (ATR12). These may all be involved in the various steps of atranone biosynthesis, although their specific roles must await experimental determination. The sequence is that of Terpene cyclase ATR13 from Stachybotrys chlorohalonatus (strain IBT 40285).